An 825-amino-acid polypeptide reads, in one-letter code: E3 ubiquitin-protein ligase ICP0 (825 aa).

Residues 1-10 are compositionally biased toward polar residues; that stretch reads MEPRPGTSSR. Residues 1–121 form a disordered region; it reads MEPRPGTSSR…VGEEEAEAGG (121 aa). Positions 46–57 are enriched in acidic residues; sequence DSEEETEVGISD. Residues 126-167 form an RING-type zinc finger; that stretch reads CAVCTDEIAPPLRCQSFPCLHPFCIPCMKTWIPLRNTCPLCN. Disordered regions lie at residues 221–312, 325–683, and 803–825; these read RSLS…GGGP, PPAA…PAPG, and RHPWSREQGAPAPAGDAPAGHGE. Positions 242–251 are enriched in acidic residues; the sequence is TDDEDDDLAD. Low complexity-rich tracts occupy residues 273–283, 290–303, and 350–367; these read TRGTSQPAATR, PRSSSSGGAPLRAG, and PPARQPRAAQEPPIVISD. Over residues 368 to 379 the composition is skewed to pro residues; that stretch reads SPPPSPRRPAGP. Low complexity-rich tracts occupy residues 380–394 and 402–439; these read GPLSFVSSSSAQVSS and PQSSGRAARPRAAVAPRVRSPPRAAAAPVVSASADAAG. The segment covering 456–468 has biased composition (polar residues); it reads RMTQAQTDTQAQS. The span at 479 to 491 shows a compositional bias: gly residues; it reads GSGGPGAEGGPGV. Low complexity-rich tracts occupy residues 492-510 and 519-540; these read PRGTNTPGAAPHAAEGAAA and DSGPAASSSASSSAAPRSPLAP. Residues 552 to 563 are compositionally biased toward basic and acidic residues; sequence RAPDSDSGDRGH. Positions 567 to 641 are enriched in low complexity; the sequence is APASAGAAPP…GGSVASASGA (75 aa). Residues 658 to 667 show a composition bias toward basic residues; sequence GPRKCARKTR. Residues 811 to 825 are compositionally biased toward low complexity; sequence GAPAPAGDAPAGHGE.

In terms of processing, auto-ubiquitinated.

It catalyses the reaction S-ubiquitinyl-[E2 ubiquitin-conjugating enzyme]-L-cysteine + [acceptor protein]-L-lysine = [E2 ubiquitin-conjugating enzyme]-L-cysteine + N(6)-ubiquitinyl-[acceptor protein]-L-lysine.. Functionally, evades nuclear antiviral defenses triggered by dsDNA viruses. Acts during the initial stages of lytic infection and the reactivation of latent viral genome. Prevents the antiviral effect of nuclear bodies by degrading host PML and SP100. Prevents antiviral response to viral DNA induced by IFI16 by degrading it. Additionally, inhibits host IRF3 nuclear signaling to prevent interferon production by the infected cells. In Homo sapiens (Human), this protein is E3 ubiquitin-protein ligase ICP0 (RL2).